The following is a 534-amino-acid chain: Cysteine/serine-rich nuclear protein 2 (534 aa).

At M1 the chain carries N-acetylmethionine. Disordered regions lie at residues 1-52 and 480-534; these read MDAF…FTPT and DCGL…PLAV. Residues 31–40 show a composition bias toward low complexity; that stretch reads SSDSADSCDS. Polar residues predominate over residues 42-52; that stretch reads NPPTTASFTPT. Positions 480 to 492 are enriched in basic and acidic residues; that stretch reads DCGLKEPESEDLH.

The protein belongs to the AXUD1 family. In terms of tissue distribution, highest expression detected in thymus, brain and ovary. Low levels detected in naive T-cells.

The protein localises to the nucleus. Binds to the consensus sequence 5'-AGAGTG-3' and has transcriptional activator activity. May play a role in apoptosis. This is Cysteine/serine-rich nuclear protein 2 (Csrnp2) from Mus musculus (Mouse).